The primary structure comprises 389 residues: Aspartyl protease UND (389 aa).

Positions 1-19 are cleaved as a signal peptide; that stretch reads MKTTMNFVFLFFLPLLINA. Residues 58 to 383 form the Peptidase A1 domain; it reads FMAEIHFGSP…DLSAKTAYIN (326 aa). The active site involves Asp-76. Cysteines 86 and 92 form a disulfide. An N-linked (GlcNAc...) asparagine glycan is attached at Asn-238. Asp-268 is an active-site residue. Cysteines 304 and 346 form a disulfide.

This sequence belongs to the peptidase A1 family.

Probable aspartic protease activated by the transcription factor MYB80. May participate in the regulation of the timing of tapetal programmed cell death (PCD) which is critical for pollen development. This Arabidopsis thaliana (Mouse-ear cress) protein is Aspartyl protease UND.